The primary structure comprises 1135 residues: Eukaryotic translation initiation factor 3 subunit A (1135 aa).

The PCI domain occupies 319-501 (LQRMAAHVLL…NSIYFGTDLT (183 aa)). Composition is skewed to basic and acidic residues over residues 588–623 (QNNAREEEEARRQEEESRKAKLAEQKRLEQEQEERE) and 829–899 (AAEE…RGGD). Disordered regions lie at residues 588–631 (QNNA…QNEI) and 829–1135 (AAEE…VKRR). Serine 908 is modified (phosphoserine). 4 stretches are compositionally biased toward basic and acidic residues: residues 920–971 (ERNE…EPDS), 985–1045 (SRDD…EPQR), 1053–1081 (DAPRNADRENRRPAGERRDRDVRETRGDQ), and 1104–1125 (AREEKPASKRDQPQEKENKAAD).

This sequence belongs to the eIF-3 subunit A family. As to quaternary structure, component of the eukaryotic translation initiation factor 3 (eIF-3) complex. The eIF-3 complex interacts with pix.

It is found in the cytoplasm. In terms of biological role, RNA-binding component of the eukaryotic translation initiation factor 3 (eIF-3) complex, which is involved in protein synthesis of a specialized repertoire of mRNAs and, together with other initiation factors, stimulates binding of mRNA and methionyl-tRNAi to the 40S ribosome. The eIF-3 complex specifically targets and initiates translation of a subset of mRNAs involved in cell proliferation. This chain is Eukaryotic translation initiation factor 3 subunit A, found in Drosophila erecta (Fruit fly).